A 79-amino-acid chain; its full sequence is Serine protease inhibitor Kazal-type 1 (79 aa).

Positions 1–18 (MKVAIIFLLSALALLSLA) are cleaved as a signal peptide. The 54-residue stretch at 26–79 (NGKTPNCPKQIMGCPRIYDPVCGTNGITYPSECSLCFENRKFGTSIHIQRRGTC) folds into the Kazal-like domain. Disulfide bonds link C32/C61, C39/C58, and C47/C79.

The protein localises to the secreted. Its function is as follows. Serine protease inhibitor which exhibits anti-trypsin activity. In the pancreas, protects against trypsin-catalyzed premature activation of zymogens. In the male reproductive tract, binds to sperm heads where it modulates sperm capacitance by inhibiting calcium uptake and nitrogen oxide (NO) production. The protein is Serine protease inhibitor Kazal-type 1 of Rattus norvegicus (Rat).